The following is a 406-amino-acid chain: Homocitrate synthase AksA (406 aa).

The region spanning 32–285 (IYIYDTTLRD…DLGLNLEVLP (254 aa)) is the Pyruvate carboxyltransferase domain.

Belongs to the alpha-IPM synthase/homocitrate synthase family.

The catalysed reaction is acetyl-CoA + 2-oxoglutarate + H2O = (2R)-homocitrate + CoA + H(+). It carries out the reaction 2-oxoadipate + acetyl-CoA + H2O = (R)-dihomocitrate + CoA + H(+). The enzyme catalyses 2-oxoheptanedioate + acetyl-CoA + H2O = (R)-trihomocitrate + CoA + H(+). It participates in organic acid metabolism; 2-oxosuberate biosynthesis. In terms of biological role, catalyzes the condensation of alpha-ketoglutarate and acetyl-CoA to form (R)-homocitrate. Can also catalyze the condensation of alpha-ketoadipate with acetyl-CoA to form (R)-homo(2)citrate, and the condensation of alpha-ketopimelate with acetyl-CoA to form (R)-homo(3)citrate. These reactions are part of the biosynthesis pathway of coenzyme B and biotin. This is Homocitrate synthase AksA (aksA) from Methanocaldococcus jannaschii (strain ATCC 43067 / DSM 2661 / JAL-1 / JCM 10045 / NBRC 100440) (Methanococcus jannaschii).